The chain runs to 1202 residues: Liprin-alpha-1 (1202 aa).

Residues 1 to 33 (MMCEVMPTISEAEGPPGGGGGHGSGSPSQPDAD) form a disordered region. A compositionally biased stretch (gly residues) spans 15–24 (PPGGGGGHGS). Positions 34 to 141 (SHFEQLMVSM…VSRHERSLRM (108 aa)) form a coiled coil. S150 is subject to Phosphoserine. Positions 176 to 214 (EKVRERLRVALERCSLLEEELGATHKELMILKEQNNQKK) form a coiled coil. 2 disordered regions span residues 224 to 245 (NHEQENTPSTSGKRSSDGSLSH) and 426 to 446 (KNQELQRARQREKMNEEHNKR). T230 carries the phosphothreonine modification. S239, S242, and S244 each carry phosphoserine. Coiled coils occupy residues 249 to 521 (LAKV…GASL) and 623 to 669 (ADAH…SGSL). S448 is subject to Phosphoserine. Basic and acidic residues predominate over residues 651-662 (ENTEQRAEEIES). Residues 651 to 855 (ENTEQRAEEI…SKLGGQAEKN (205 aa)) are disordered. 3 positions are modified to phosphoserine: S666, S668, and S693. The segment covering 686–700 (ASSLASSSPPGSGRS) has biased composition (low complexity). Residues 725 to 736 (SREEVRDDKTTI) are compositionally biased toward basic and acidic residues. T761 carries the post-translational modification Phosphothreonine. Basic and acidic residues predominate over residues 762–771 (VSHEDIRDIR). A Phosphoserine modification is found at S763. The span at 832 to 841 (VSETDNSSQD) shows a compositional bias: polar residues. Residues 847–871 (KLGGQAEKNRKLQKKHELLEEARRQ) are a coiled coil. SAM domains are found at residues 878–944 (WDGP…IMSL), 963–1027 (NHEW…LRRL), and 1051–1120 (WSND…LLVM). Residues 1021-1050 (IMCLRRLNYDRKELERKREESQSEIKDVLV) are a coiled coil. S1133 carries the phosphoserine modification. The residue at position 1159 (T1159) is a Phosphothreonine. The segment at 1163 to 1202 (NFRVTSSMSSPSMQPKKMQMDGNVSGTQRLDSATVRTYSC) is disordered. Positions 1168–1179 (SSMSSPSMQPKK) are enriched in low complexity. Over residues 1184–1202 (GNVSGTQRLDSATVRTYSC) the composition is skewed to polar residues.

It belongs to the liprin family. Liprin-alpha subfamily. In terms of assembly, homodimer. Interacts with PTPRF (via D2 domain). Part of a cortical microtubule stabilization complex (CMSC) composed of KANK1, PPFIA1, PPFIBP1, ERC1/ELKS, PHLDB2/LL5beta, CLASPs, KIF21A and possibly additional interactors; within CMSCs KANK1 and PHLDB2/LL5beta seem to be the core components for recruiting microtubule-binding proteins KIF21A and CLASPs, whereas PPFIA1, PPFIBP1 and ERC1/ELKS serve as scaffolds for protein clustering. Ubiquitous.

The protein localises to the cytoplasm. The protein resides in the cell cortex. Its function is as follows. May regulate the disassembly of focal adhesions. May localize receptor-like tyrosine phosphatases type 2A at specific sites on the plasma membrane, possibly regulating their interaction with the extracellular environment and their association with substrates. This is Liprin-alpha-1 (PPFIA1) from Homo sapiens (Human).